The following is a 417-amino-acid chain: Serine hydroxymethyltransferase (417 aa).

(6S)-5,6,7,8-tetrahydrofolate contacts are provided by residues L112 and 116-118 (GHL). Residue K221 is modified to N6-(pyridoxal phosphate)lysine. E247 serves as a coordination point for (6S)-5,6,7,8-tetrahydrofolate.

The protein belongs to the SHMT family. As to quaternary structure, homodimer. Requires pyridoxal 5'-phosphate as cofactor.

It is found in the cytoplasm. The catalysed reaction is (6R)-5,10-methylene-5,6,7,8-tetrahydrofolate + glycine + H2O = (6S)-5,6,7,8-tetrahydrofolate + L-serine. Its pathway is one-carbon metabolism; tetrahydrofolate interconversion. The protein operates within amino-acid biosynthesis; glycine biosynthesis; glycine from L-serine: step 1/1. Catalyzes the reversible interconversion of serine and glycine with tetrahydrofolate (THF) serving as the one-carbon carrier. This reaction serves as the major source of one-carbon groups required for the biosynthesis of purines, thymidylate, methionine, and other important biomolecules. Also exhibits THF-independent aldolase activity toward beta-hydroxyamino acids, producing glycine and aldehydes, via a retro-aldol mechanism. The polypeptide is Serine hydroxymethyltransferase (Borreliella afzelii (strain PKo) (Borrelia afzelii)).